A 21-amino-acid chain; its full sequence is Cold shock protein CspSt (21 aa).

The CSD domain maps to Lys-1–Asp-21.

It is found in the cytoplasm. This chain is Cold shock protein CspSt, found in Streptococcus thermophilus.